Reading from the N-terminus, the 206-residue chain is Charged multivesicular body protein 6 (206 aa).

A lipid anchor (N-myristoyl glycine) is attached at Gly2. Residues 11–103 (TRVTEQDRAV…AQIEMKVIEG (93 aa)) are a coiled coil. The tract at residues 167–206 (EADLELPEVPGEELPEVPEQEPVREKERVKKKPEREMVAV) is disordered. Residues 168–185 (ADLELPEVPGEELPEVPE) are compositionally biased toward acidic residues. The short motif at 170–181 (LELPEVPGEELP) is the Type-2 MIT-interacting motif element. Positions 187–206 (EPVREKERVKKKPEREMVAV) are enriched in basic and acidic residues.

Belongs to the SNF7 family. Probable core component of the endosomal sorting required for transport complex III (ESCRT-III). ESCRT-III components are thought to multimerize to form a flat lattice on the perimeter membrane of the endosome.

Its subcellular location is the endomembrane system. It localises to the late endosome membrane. Functionally, probable core component of the endosomal sorting required for transport complex III (ESCRT-III) which is involved in multivesicular bodies (MVBs) formation and sorting of endosomal cargo proteins into MVBs. MVBs contain intraluminal vesicles (ILVs) that are generated by invagination and scission from the limiting membrane of the endosome and mostly are delivered to lysosomes enabling degradation of membrane proteins, such as stimulated growth factor receptors, lysosomal enzymes and lipids. In the ESCRT-III complex, it probably serves as an acceptor for the ESCRT-II complex on endosomal membranes. This Danio rerio (Zebrafish) protein is Charged multivesicular body protein 6 (chmp6).